A 249-amino-acid polypeptide reads, in one-letter code: uncharacterized protein (249 aa).

The protein resides in the cytoplasm. Its subcellular location is the nucleus. This is an uncharacterized protein from Schizosaccharomyces pombe (strain 972 / ATCC 24843) (Fission yeast).